Reading from the N-terminus, the 144-residue chain is UPF0178 protein Exig_1155 (144 aa).

Positions 110-144 (IRRAGGRTKGPKKRTRQEDASFEQSFSRLLTEKTD) are disordered. Residues 113–124 (AGGRTKGPKKRT) are compositionally biased toward basic residues.

The protein belongs to the UPF0178 family.

This Exiguobacterium sibiricum (strain DSM 17290 / CCUG 55495 / CIP 109462 / JCM 13490 / 255-15) protein is UPF0178 protein Exig_1155.